A 478-amino-acid chain; its full sequence is Glutamate--tRNA ligase (478 aa).

A 'HIGH' region motif is present at residues 15-25; it reads PSPTGFLHIGG. A 'KMSKS' region motif is present at residues 244–248; it reads KLSKR. Residue Lys247 coordinates ATP.

It belongs to the class-I aminoacyl-tRNA synthetase family. Glutamate--tRNA ligase type 1 subfamily. In terms of assembly, monomer.

Its subcellular location is the cytoplasm. It carries out the reaction tRNA(Glu) + L-glutamate + ATP = L-glutamyl-tRNA(Glu) + AMP + diphosphate. Catalyzes the attachment of glutamate to tRNA(Glu) in a two-step reaction: glutamate is first activated by ATP to form Glu-AMP and then transferred to the acceptor end of tRNA(Glu). In Bradyrhizobium sp. (strain ORS 278), this protein is Glutamate--tRNA ligase.